Here is a 1580-residue protein sequence, read N- to C-terminus: Endoribonuclease Dicer homolog 3 (1580 aa).

Residues 1-12 (MHSSLEPEKMEE) are compositionally biased toward basic and acidic residues. The disordered stretch occupies residues 1-22 (MHSSLEPEKMEEGGGSNSLKRK). In terms of domain architecture, Helicase ATP-binding spans 51 to 223 (VYEVAKNRNI…SPSNYAAQVS (173 aa)). Residue 64-71 (LGTGIDKS) coordinates ATP. The short motif at 170 to 173 (DECH) is the DECH box element. One can recognise a Helicase C-terminal domain in the interval 394–562 (KLKELFHLLD…SCPPPVKNGH (169 aa)). Positions 581 to 597 (EEAASTQTMSDPPSRNE) are enriched in polar residues. 2 disordered regions span residues 581–601 (EEAA…QLPP) and 613–638 (QSNG…KKRK). Residues 622–633 (SSKSKSSSSAAG) show a composition bias toward low complexity. The 125-residue stretch at 836-960 (NLIHFANASS…LPPELLARID (125 aa)) folds into the PAZ domain. RNase III domains follow at residues 985 to 1157 (ASQL…VSGG) and 1198 to 1340 (LIEL…IDTR). The Mg(2+) site is built by E1234, D1326, and E1329.

The protein belongs to the helicase family. Dicer subfamily. As to quaternary structure, interacts with DRB2 and DRB5. Mg(2+) is required as a cofactor. Mn(2+) serves as cofactor.

The protein localises to the nucleus. Its subcellular location is the nucleolus. Functionally, ribonuclease (RNase) III involved in RNA-mediated post-transcriptional gene silencing (PTGS). Involved in the processing of repeat-associated small interfering RNAs (ra-siRNAs, derived from heterochromatin and DNA repeats such as transposons) by cleaving small dsRNAs into 24 nucleotide ra-siRNAs. Plays a role in antiviral RNA silencing. Involved in the production of viral siRNAs derived from the cabbage leaf curl virus (CaLCuV) and tobacco rattle virus (TRV). Targeted by the viral silencing suppressor (VSR) protein 2b of the cucumber mosaic virus (CMV) that inactivates DCL3 function in RNA silencing. Acts redundantly with DICER-LIKE 1 (DCL1) to promote flowering via repression of FLOWERING LOCUS C (FLC). Does not seem to be involved in microRNAs (miRNAs) processing. This chain is Endoribonuclease Dicer homolog 3 (DCL3), found in Arabidopsis thaliana (Mouse-ear cress).